The sequence spans 570 residues: Molecular chaperone MKKS (570 aa).

ATP is bound at residue 192–199; sequence GHIILGKS. The tract at residues 198–370 is substrate-binding apical domain; the sequence is KSLIVPLKGQ…FHLIPNEATI (173 aa).

This sequence belongs to the TCP-1 chaperonin family. In terms of assembly, component of a complex composed at least of MKKS, BBS10, BBS12, TCP1, CCT2, CCT3, CCT4, CCT5 and CCT8. Interacts with STUB1. Interacts with BBS2 (via coiled coil domain). Interacts with CCDC28B. Interacts with BBS12. Interacts with SMARCC1, a component of the SWI/SNF complexes; the interaction takes place predominantly in the cytoplasm and may modulate SMARCC1 location. Interacts with DLEC1. In terms of tissue distribution, widely expressed in adult and fetal tissues.

It localises to the cytoplasm. The protein localises to the cytoskeleton. It is found in the microtubule organizing center. Its subcellular location is the centrosome. The protein resides in the cytosol. It localises to the nucleus. Its function is as follows. Probable molecular chaperone that assists the folding of proteins upon ATP hydrolysis. Plays a role in the assembly of BBSome, a complex involved in ciliogenesis regulating transports vesicles to the cilia. May play a role in protein processing in limb, cardiac and reproductive system development. May play a role in cytokinesis. The sequence is that of Molecular chaperone MKKS from Homo sapiens (Human).